Here is a 130-residue protein sequence, read N- to C-terminus: MRHRKSGRQLNRNSSHRQAMFRNMACSIVRHEVIKTTVAKAKELRRVVEPLITLAKSDSVANRRLAFARTRDAEVVGKLFTELGPRFQERPGGYTRILKCGLRTGDKAPMAYIELVGRPEAAEAVEDTAE.

Belongs to the bacterial ribosomal protein bL17 family. Part of the 50S ribosomal subunit. Contacts protein L32.

This chain is Large ribosomal subunit protein bL17, found in Shewanella pealeana (strain ATCC 700345 / ANG-SQ1).